A 278-amino-acid polypeptide reads, in one-letter code: Imidazole glycerol phosphate synthase subunit HisF (278 aa).

Residues aspartate 11 and aspartate 130 contribute to the active site.

Belongs to the HisA/HisF family. Heterodimer of HisH and HisF.

The protein localises to the cytoplasm. The enzyme catalyses 5-[(5-phospho-1-deoxy-D-ribulos-1-ylimino)methylamino]-1-(5-phospho-beta-D-ribosyl)imidazole-4-carboxamide + L-glutamine = D-erythro-1-(imidazol-4-yl)glycerol 3-phosphate + 5-amino-1-(5-phospho-beta-D-ribosyl)imidazole-4-carboxamide + L-glutamate + H(+). The protein operates within amino-acid biosynthesis; L-histidine biosynthesis; L-histidine from 5-phospho-alpha-D-ribose 1-diphosphate: step 5/9. Functionally, IGPS catalyzes the conversion of PRFAR and glutamine to IGP, AICAR and glutamate. The HisF subunit catalyzes the cyclization activity that produces IGP and AICAR from PRFAR using the ammonia provided by the HisH subunit. This chain is Imidazole glycerol phosphate synthase subunit HisF, found in Thermodesulfovibrio yellowstonii (strain ATCC 51303 / DSM 11347 / YP87).